A 671-amino-acid polypeptide reads, in one-letter code: Probable serine/threonine-protein kinase DDB_G0286627 (671 aa).

In terms of domain architecture, Protein kinase spans 31–283 (WVIERQLSKG…SHQLIKHPFF (253 aa)). Residues 37–45 (LSKGSFGQV) and Lys-61 contribute to the ATP site. Asp-148 acts as the Proton acceptor in catalysis. The helical transmembrane segment at 369 to 389 (FKIIYLFLILLFLMTILVNLN) threads the bilayer. A disordered region spans residues 410–523 (PESNPIKKPS…PPVTETPKPT (114 aa)). Residues 427–490 (NQYSEGSQSS…PTDSSTTDPP (64 aa)) show a composition bias toward low complexity. Residues 491 to 513 (VTDPPITDPPITDPPVTDPPITE) show a composition bias toward pro residues.

It belongs to the protein kinase superfamily. STE Ser/Thr protein kinase family. Mg(2+) serves as cofactor.

The protein resides in the membrane. It catalyses the reaction L-seryl-[protein] + ATP = O-phospho-L-seryl-[protein] + ADP + H(+). It carries out the reaction L-threonyl-[protein] + ATP = O-phospho-L-threonyl-[protein] + ADP + H(+). The polypeptide is Probable serine/threonine-protein kinase DDB_G0286627 (Dictyostelium discoideum (Social amoeba)).